Consider the following 336-residue polypeptide: Nicotinate-nucleotide--dimethylbenzimidazole phosphoribosyltransferase (336 aa).

The Proton acceptor role is filled by Glu304.

Belongs to the CobT family.

The catalysed reaction is 5,6-dimethylbenzimidazole + nicotinate beta-D-ribonucleotide = alpha-ribazole 5'-phosphate + nicotinate + H(+). The protein operates within nucleoside biosynthesis; alpha-ribazole biosynthesis; alpha-ribazole from 5,6-dimethylbenzimidazole: step 1/2. Functionally, catalyzes the synthesis of alpha-ribazole-5'-phosphate from nicotinate mononucleotide (NAMN) and 5,6-dimethylbenzimidazole (DMB). The chain is Nicotinate-nucleotide--dimethylbenzimidazole phosphoribosyltransferase from Ruegeria sp. (strain TM1040) (Silicibacter sp.).